A 37-amino-acid chain; its full sequence is Diptericin (37 aa).

A disordered region spans residues 1–37 (DLHIPPPDNKINWPQLSGGGGGSPKTGYDININAQQK).

The protein belongs to the attacin/sarcotoxin-2 family. Synthesized by the fat body and secreted into the hemolymph.

The protein resides in the secreted. Its function is as follows. Acute phase protein with antibacterial activity against the Gram-negative bacteria E.coli (MIC=6.25 ug/ml) and S.sonnei (MIC=12.5 ug/ml). Lacks antibacterial activity against the Gram-negative bacteria P.vulgaris, P.rettgeri and P.aeruginosa, and against the Gram-positive bacteria B.subtilis, S.aureus, M.luteus, B.megaterium, C.bovis and E.cloacae. This chain is Diptericin, found in Sarcophaga peregrina (Flesh fly).